The sequence spans 815 residues: G-type lectin S-receptor-like serine/threonine-protein kinase SD1-1 (815 aa).

The signal sequence occupies residues 1–22 (MREIHSLFSLSLFLISSSLSVA). Topologically, residues 23–438 (LDYNVITPKE…FAKIEFKGRE (416 aa)) are extracellular. A Bulb-type lectin domain is found at 25-152 (YNVITPKEFL…EEAVLWQSFD (128 aa)). N-linked (GlcNAc...) asparagine glycosylation is found at Asn93, Asn249, and Asn265. In terms of domain architecture, EGF-like spans 288–326 (PEDECDYYSICGAYAVCGINSKNTPSCSCLQGFKPKSGR). 2 disulfide bridges follow: Cys292/Cys304 and Cys298/Cys314. Residues Asn329 and Asn385 are each glycosylated (N-linked (GlcNAc...) asparagine). In terms of domain architecture, PAN spans 345–428 (CEKKDAFVKF…FGQDVYIRMG (84 aa)). 2 disulfide bridges follow: Cys378–Cys403 and Cys382–Cys388. A helical transmembrane segment spans residues 439 to 459 (VVGMVVGSVVAIAVVLVVVFA). Topologically, residues 460–815 (CFRKKIMKRY…EVSITMLQGR (356 aa)) are cytoplasmic. One can recognise a Protein kinase domain in the interval 500 to 783 (FSYVNFLGRG…SDSSLPHPTQ (284 aa)). Residues 506–514 (LGRGGFGPV) and Lys528 each bind ATP. Ser534 carries the phosphoserine modification. The caM-binding stretch occupies residues 589-606 (RRSTELDWKKRMNIINGV). Asp625 serves as the catalytic Proton acceptor. Position 642 is a phosphoserine (Ser642). At Thr659 the chain carries Phosphothreonine. Residues Ser797 and Ser803 each carry the phosphoserine modification. Thr810 bears the Phosphothreonine mark.

This sequence belongs to the protein kinase superfamily. Ser/Thr protein kinase family. In terms of assembly, interacts with PUB9, PUB13 and PUB14.

It is found in the cell membrane. It carries out the reaction L-seryl-[protein] + ATP = O-phospho-L-seryl-[protein] + ADP + H(+). The catalysed reaction is L-threonyl-[protein] + ATP = O-phospho-L-threonyl-[protein] + ADP + H(+). This Arabidopsis thaliana (Mouse-ear cress) protein is G-type lectin S-receptor-like serine/threonine-protein kinase SD1-1 (SD11).